The sequence spans 193 residues: dCTP deaminase (193 aa).

Residues 110–115 (RSSLAR), D128, 136–138 (VLE), Y171, K178, and Q182 each bind dCTP. Residue E138 is the Proton donor/acceptor of the active site.

It belongs to the dCTP deaminase family. Homotrimer.

The catalysed reaction is dCTP + H2O + H(+) = dUTP + NH4(+). It participates in pyrimidine metabolism; dUMP biosynthesis; dUMP from dCTP (dUTP route): step 1/2. Functionally, catalyzes the deamination of dCTP to dUTP. The polypeptide is dCTP deaminase (Buchnera aphidicola subsp. Baizongia pistaciae (strain Bp)).